A 164-amino-acid chain; its full sequence is Peptidyl-prolyl cis-trans isomerase A (164 aa).

Met1 bears the N-acetylmethionine mark. Val2 is modified (N-acetylvaline; in Peptidyl-prolyl cis-trans isomerase A, N-terminally processed). The 157-residue stretch at 7 to 163 folds into the PPIase cyclophilin-type domain; the sequence is FFDIAVDGEP…KKITIADCGQ (157 aa). N6-acetyllysine; alternate is present on Lys28. Lys28 participates in a covalent cross-link: Glycyl lysine isopeptide (Lys-Gly) (interchain with G-Cter in SUMO2); alternate. A Glycyl lysine isopeptide (Lys-Gly) (interchain with G-Cter in ubiquitin); alternate cross-link involves residue Lys28. 2 positions are modified to N6-acetyllysine: Lys44 and Lys76. Cys62 and Cys161 form a disulfide bridge. Phosphoserine is present on Ser77. An N6-acetyllysine; alternate modification is found at Lys82. Residue Lys82 forms a Glycyl lysine isopeptide (Lys-Gly) (interchain with G-Cter in SUMO2); alternate linkage. A Phosphothreonine modification is found at Thr93. N-linked (GlcNAc...) asparagine glycosylation occurs at Asn108. Residues Lys125, Lys131, and Lys133 each carry the N6-acetyllysine modification.

It belongs to the cyclophilin-type PPIase family. PPIase A subfamily. In terms of assembly, interacts with protein phosphatase PPP3CA/calcineurin A. Interacts with isoform 2 of BSG/CD147. Interacts with FOXO1; the interaction promotes FOXO1 dephosphorylation, nuclear accumulation and transcriptional activity. Interacts with integrin ITGA2B:ITGB3; the interaction is ROS and peptidyl-prolyl cis-trans isomerase (PPIase) activity-dependent and is increased in the presence of thrombin. Interacts with MAP3K5. Interacts with TARDBP; the interaction is dependent on the RNA-binding activity of TARDBP and the PPIase activity of PPIA/CYPA and the acetylation of PPIA/CYPA at Lys-125 favors the interaction. Interacts with HNRNPA1, HNRNPA2B1, HNRNPC, RBMX, HNRNPK and HNRNPM. Acetylation at Lys-125 markedly inhibits catalysis of cis to trans isomerization. PPIA acetylation also antagonizes the immunosuppressive effects of cyclosporine by inhibiting the sequential steps of cyclosporine binding and calcineurin inhibition. Acetylation at Lys-125 favors the interaction with TARDBP.

The protein localises to the cytoplasm. The protein resides in the secreted. Its subcellular location is the nucleus. The enzyme catalyses [protein]-peptidylproline (omega=180) = [protein]-peptidylproline (omega=0). Binds cyclosporin A (CsA). CsA mediates some of its effects via an inhibitory action on PPIase. In terms of biological role, catalyzes the cis-trans isomerization of proline imidic peptide bonds in oligopeptides. Exerts a strong chemotactic effect on leukocytes partly through activation of one of its membrane receptors BSG/CD147, initiating a signaling cascade that culminates in MAPK/ERK activation. Activates endothelial cells (ECs) in a proinflammatory manner by stimulating activation of NF-kappa-B and ERK, JNK and p38 MAP-kinases and by inducing expression of adhesion molecules including SELE and VCAM1. Induces apoptosis in ECs by promoting the FOXO1-dependent expression of CCL2 and BCL2L11 which are involved in EC chemotaxis and apoptosis. In response to oxidative stress, initiates proapoptotic and antiapoptotic signaling in ECs via activation of NF-kappa-B and AKT1 and up-regulation of antiapoptotic protein BCL2. Negatively regulates MAP3K5/ASK1 kinase activity, autophosphorylation and oxidative stress-induced apoptosis mediated by MAP3K5/ASK1. Necessary for the assembly of TARDBP in heterogeneous nuclear ribonucleoprotein (hnRNP) complexes and regulates TARDBP binding to RNA UG repeats and TARDBP-dependent expression of HDAC6, ATG7 and VCP which are involved in clearance of protein aggregates. Plays an important role in platelet activation and aggregation. Regulates calcium mobilization and integrin ITGA2B:ITGB3 bidirectional signaling via increased ROS production as well as by facilitating the interaction between integrin and the cell cytoskeleton. Binds heparan sulfate glycosaminoglycans. This chain is Peptidyl-prolyl cis-trans isomerase A (PPIA), found in Bos taurus (Bovine).